The chain runs to 103 residues: Histone H4 (103 aa).

Positions 1-14 (MTGRGKGGKGLGKG) are enriched in gly residues. Positions 1 to 20 (MTGRGKGGKGLGKGGAKRHR) are disordered. An N6-acetyl-N6-methyllysine; alternate modification is found at Lys6. N6-methyllysine; alternate is present on residues Lys6, Lys9, and Lys13. Position 13 is an N6-acetyl-N6-methyllysine; alternate (Lys13). The DNA-binding element occupies 17-21 (KRHRK). Lys92 is modified (N6-glutaryllysine).

This sequence belongs to the histone H4 family. The nucleosome is a histone octamer containing two molecules each of H2A, H2B, H3 and H4 assembled in one H3-H4 heterotetramer and two H2A-H2B heterodimers. The octamer wraps approximately 147 bp of DNA. In terms of processing, glutarylation at Lys-92 (H4K91glu) destabilizes nucleosomes by promoting dissociation of the H2A-H2B dimers from nucleosomes.

It is found in the nucleus. It localises to the chromosome. Its function is as follows. Core component of nucleosome. Nucleosomes wrap and compact DNA into chromatin, limiting DNA accessibility to the cellular machineries which require DNA as a template. Histones thereby play a central role in transcription regulation, DNA repair, DNA replication and chromosomal stability. DNA accessibility is regulated via a complex set of post-translational modifications of histones, also called histone code, and nucleosome remodeling. In Neurospora crassa (strain ATCC 24698 / 74-OR23-1A / CBS 708.71 / DSM 1257 / FGSC 987), this protein is Histone H4 (hH4-1).